Here is an 82-residue protein sequence, read N- to C-terminus: High-potential iron-sulfur protein (82 aa).

Cys42, Cys45, Cys60, and Cys74 together coordinate [4Fe-4S] cluster.

Belongs to the high-potential iron-sulfur protein (HiPIP) family. As to quaternary structure, homodimer.

Its subcellular location is the periplasm. In terms of biological role, specific class of high-redox-potential 4Fe-4S ferredoxins. Functions in anaerobic electron transport in most purple and in some other photosynthetic bacteria and in at least one genus (Paracoccus) of halophilic, denitrifying bacteria. The chain is High-potential iron-sulfur protein (hip) from Marichromatium purpuratum (Chromatium purpuratum).